The chain runs to 208 residues: MNVNVINHPLVRHKLTLMREADCSTYKFRTLATELARLMAYEASRDFEIEKYLIDGWCGQIEGDRIKGKTLTVVPILRAGLGMLDGVLDLIPTAKISVVGLQRDEETLKPVSYFEKFVDSMDERPALIIDPMLATGGSMVATIDLLKAKGCKNIKALVLVAAPEGVKAVNDAHPDVTIYTAALDSHLNENGYIIPGLGDAGDKIFGTR.

5-phospho-alpha-D-ribose 1-diphosphate is bound by residues Arg78, Arg103, and 130–138; that span reads DPMLATGGS. Uracil is bound by residues Ile193 and 198-200; that span reads GDA. Asp199 contributes to the 5-phospho-alpha-D-ribose 1-diphosphate binding site.

Belongs to the UPRTase family. The cofactor is Mg(2+).

The catalysed reaction is UMP + diphosphate = 5-phospho-alpha-D-ribose 1-diphosphate + uracil. Its pathway is pyrimidine metabolism; UMP biosynthesis via salvage pathway; UMP from uracil: step 1/1. Its activity is regulated as follows. Allosterically activated by GTP. In terms of biological role, catalyzes the conversion of uracil and 5-phospho-alpha-D-ribose 1-diphosphate (PRPP) to UMP and diphosphate. This is Uracil phosphoribosyltransferase from Neisseria meningitidis serogroup A / serotype 4A (strain DSM 15465 / Z2491).